The primary structure comprises 227 residues: Cytochrome c oxidase subunit 2 (227 aa).

At 1-14 (MAHPVQLGFQDAAS) the chain is on the mitochondrial intermembrane side. Residues 15-45 (PIMEELLYFHDHTLMIMFLISSLVLYIISLM) traverse the membrane as a helical segment. Over 46–59 (LTTKLTHTSTMDAQ) the chain is Mitochondrial matrix. The helical transmembrane segment at 60–87 (EVETVWTILPAAILILIALPSLRILYMM) threads the bilayer. Residues 88-227 (DEITSPSLTL…HFEEWLLFTL (140 aa)) are Mitochondrial intermembrane-facing. Positions 161, 196, 198, 200, 204, and 207 each coordinate Cu cation. Position 198 (Glu-198) interacts with Mg(2+).

It belongs to the cytochrome c oxidase subunit 2 family. In terms of assembly, component of the cytochrome c oxidase (complex IV, CIV), a multisubunit enzyme composed of 14 subunits. The complex is composed of a catalytic core of 3 subunits MT-CO1, MT-CO2 and MT-CO3, encoded in the mitochondrial DNA, and 11 supernumerary subunits COX4I, COX5A, COX5B, COX6A, COX6B, COX6C, COX7A, COX7B, COX7C, COX8 and NDUFA4, which are encoded in the nuclear genome. The complex exists as a monomer or a dimer and forms supercomplexes (SCs) in the inner mitochondrial membrane with NADH-ubiquinone oxidoreductase (complex I, CI) and ubiquinol-cytochrome c oxidoreductase (cytochrome b-c1 complex, complex III, CIII), resulting in different assemblies (supercomplex SCI(1)III(2)IV(1) and megacomplex MCI(2)III(2)IV(2)). Found in a complex with TMEM177, COA6, COX18, COX20, SCO1 and SCO2. Interacts with TMEM177 in a COX20-dependent manner. Interacts with COX20. Interacts with COX16. Cu cation serves as cofactor.

It localises to the mitochondrion inner membrane. It catalyses the reaction 4 Fe(II)-[cytochrome c] + O2 + 8 H(+)(in) = 4 Fe(III)-[cytochrome c] + 2 H2O + 4 H(+)(out). Component of the cytochrome c oxidase, the last enzyme in the mitochondrial electron transport chain which drives oxidative phosphorylation. The respiratory chain contains 3 multisubunit complexes succinate dehydrogenase (complex II, CII), ubiquinol-cytochrome c oxidoreductase (cytochrome b-c1 complex, complex III, CIII) and cytochrome c oxidase (complex IV, CIV), that cooperate to transfer electrons derived from NADH and succinate to molecular oxygen, creating an electrochemical gradient over the inner membrane that drives transmembrane transport and the ATP synthase. Cytochrome c oxidase is the component of the respiratory chain that catalyzes the reduction of oxygen to water. Electrons originating from reduced cytochrome c in the intermembrane space (IMS) are transferred via the dinuclear copper A center (CU(A)) of subunit 2 and heme A of subunit 1 to the active site in subunit 1, a binuclear center (BNC) formed by heme A3 and copper B (CU(B)). The BNC reduces molecular oxygen to 2 water molecules using 4 electrons from cytochrome c in the IMS and 4 protons from the mitochondrial matrix. This is Cytochrome c oxidase subunit 2 (MT-CO2) from Varecia variegata (Black-and-white ruffed lemur).